A 580-amino-acid polypeptide reads, in one-letter code: MNRISAISTLVTPLPLLPSCSFVPTRRCYPRRATPYSRRINLKPLTSRIVLLTRRRQLGQIVEEVEAAKKRYGRLNTIVMNSVLEACVHCGNIDLALRMFHEMAEPGGIGVDSISYATILKGLGKARRIDEAFQMLETIEYGTAAGTPKLSSSLIYGLLDALINAGDLRRANGLLARYDILLLDHGTPSVLIYNLLMKGYVNSESPQAAINLLDEMLRLRLEPDRLTYNTLIHACIKCGDLDAAMKFFNDMKEKAEEYYDDFLQPDVVTYTTLVKGFGDATDLLSLQEIFLEMKLCENVFIDRTAFTAVVDAMLKCGSTSGALCVFGEILKRSGANEVLRPKPHLYLSMMRAFAVQGDYGMVRNLYLRLWPDSSGSISKAVQQEADNLLMEAALNDGQLDEALGILLSIVRRWKTIPWTTSGGMAAVRLETLLGFSKSILRPHLLSKVIPSEPIESIMIRFEATRPLLGTLQLKNVAMRFFKEQVVPIVDDRGSCIGLLHREDCNNLDAPLVSMMRSPPTCVSTTTSIGRVVDLVLEKKLKMVIVVHCGNFSGSGYSSKAVGAFTRAQLYRLFESEQKLL.

PPR repeat units lie at residues 76–110 (NTIV…GGIG), 112–142 (DSIS…IEYG), 151–181 (SSSL…YDIL), 189–223 (SVLI…RLEP), 224–254 (DRLT…MKEK), 266–296 (DVVT…MKLC), 302–337 (DRTA…GANE), 342–376 (KPHL…SSGS), and 382–417 (QQEA…KTIP). The CBS domain maps to 486–553 (VPIVDDRGSC…IVVHCGNFSG (68 aa)).

It belongs to the PPR family. P subfamily.

This is Pentatricopeptide repeat-containing protein At5g10690 (CBSPPR1) from Arabidopsis thaliana (Mouse-ear cress).